Consider the following 501-residue polypeptide: Ribulose bisphosphate carboxylase large chain (501 aa).

Substrate is bound by residues Asn141 and Thr191. Lys193 serves as the catalytic Proton acceptor. Residue Lys195 participates in substrate binding. Mg(2+)-binding residues include Lys219, Asp221, and Glu222. The residue at position 219 (Lys219) is an N6-carboxylysine. Residue His311 is the Proton acceptor of the active site. Substrate contacts are provided by Arg312, His344, and Ser396.

It belongs to the RuBisCO large chain family. Type I subfamily. In terms of assembly, heterohexadecamer of 8 large chains and 8 small chains. It depends on Mg(2+) as a cofactor.

It catalyses the reaction 2 (2R)-3-phosphoglycerate + 2 H(+) = D-ribulose 1,5-bisphosphate + CO2 + H2O. It carries out the reaction D-ribulose 1,5-bisphosphate + O2 = 2-phosphoglycolate + (2R)-3-phosphoglycerate + 2 H(+). In terms of biological role, ruBisCO catalyzes two reactions: the carboxylation of D-ribulose 1,5-bisphosphate, the primary event in carbon dioxide fixation, as well as the oxidative fragmentation of the pentose substrate. Both reactions occur simultaneously and in competition at the same active site. The polypeptide is Ribulose bisphosphate carboxylase large chain (Paraburkholderia phymatum (strain DSM 17167 / CIP 108236 / LMG 21445 / STM815) (Burkholderia phymatum)).